The primary structure comprises 121 residues: Fluoride-specific ion channel FluC (121 aa).

The next 4 membrane-spanning stretches (helical) occupy residues 5–25, 33–53, 66–83, and 98–118; these read LLIFLGGGTGSVLRYLLTISI, FPWGTFAVNILGCILIGVFYT, LMLTIGLCGGFTTFSTFS, and FFTYIIGSVVLGILGVMLGIW. 2 residues coordinate Na(+): Gly-74 and Thr-77.

This sequence belongs to the fluoride channel Fluc/FEX (TC 1.A.43) family.

It localises to the cell inner membrane. It carries out the reaction fluoride(in) = fluoride(out). Na(+) is not transported, but it plays an essential structural role and its presence is essential for fluoride channel function. In terms of biological role, fluoride-specific ion channel. Important for reducing fluoride concentration in the cell, thus reducing its toxicity. In Phocaeicola vulgatus (strain ATCC 8482 / DSM 1447 / JCM 5826 / CCUG 4940 / NBRC 14291 / NCTC 11154) (Bacteroides vulgatus), this protein is Fluoride-specific ion channel FluC.